We begin with the raw amino-acid sequence, 268 residues long: 3-deoxy-manno-octulosonate cytidylyltransferase (268 aa).

The protein belongs to the KdsB family.

The protein localises to the cytoplasm. It catalyses the reaction 3-deoxy-alpha-D-manno-oct-2-ulosonate + CTP = CMP-3-deoxy-beta-D-manno-octulosonate + diphosphate. It functions in the pathway nucleotide-sugar biosynthesis; CMP-3-deoxy-D-manno-octulosonate biosynthesis; CMP-3-deoxy-D-manno-octulosonate from 3-deoxy-D-manno-octulosonate and CTP: step 1/1. It participates in bacterial outer membrane biogenesis; lipopolysaccharide biosynthesis. Its function is as follows. Activates KDO (a required 8-carbon sugar) for incorporation into bacterial lipopolysaccharide in Gram-negative bacteria. The chain is 3-deoxy-manno-octulosonate cytidylyltransferase from Ralstonia pickettii (strain 12J).